The chain runs to 66 residues: 14-3-3-like protein 2 (66 aa).

Belongs to the 14-3-3 family.

In Pseudotsuga menziesii (Douglas-fir), this protein is 14-3-3-like protein 2.